The chain runs to 343 residues: Anthranilate phosphoribosyltransferase (343 aa).

Residues Gly-84, 87 to 88 (GD), Thr-92, 94 to 97 (NIST), 112 to 120 (KHGNRSASS), and Ser-124 contribute to the 5-phospho-alpha-D-ribose 1-diphosphate site. Residue Gly-84 participates in anthranilate binding. Ser-96 is a binding site for Mg(2+). Asn-115 lines the anthranilate pocket. Residue Arg-170 participates in anthranilate binding. Residues Asp-229 and Glu-230 each coordinate Mg(2+).

It belongs to the anthranilate phosphoribosyltransferase family. In terms of assembly, homodimer. Mg(2+) serves as cofactor.

The catalysed reaction is N-(5-phospho-beta-D-ribosyl)anthranilate + diphosphate = 5-phospho-alpha-D-ribose 1-diphosphate + anthranilate. Its pathway is amino-acid biosynthesis; L-tryptophan biosynthesis; L-tryptophan from chorismate: step 2/5. Functionally, catalyzes the transfer of the phosphoribosyl group of 5-phosphorylribose-1-pyrophosphate (PRPP) to anthranilate to yield N-(5'-phosphoribosyl)-anthranilate (PRA). The sequence is that of Anthranilate phosphoribosyltransferase from Bordetella pertussis (strain Tohama I / ATCC BAA-589 / NCTC 13251).